The primary structure comprises 69 residues: Rubredoxin-1 (69 aa).

The 56-residue stretch at 14–69 (QASWMCAECGYIYDPAEGNLETNIRPGMPFDKLPDDWSCPVCNHPKNQFTKFISQL) folds into the Rubredoxin-like domain. Fe cation is bound by residues C19, C22, C52, and C55.

It belongs to the rubredoxin family. Monomer. It depends on Fe(3+) as a cofactor.

Its function is as follows. Serves as an electron acceptor for pyruvate ferredoxin oxidoreductase (PFOR). This chain is Rubredoxin-1 (rub1), found in Chlorobaculum tepidum (strain ATCC 49652 / DSM 12025 / NBRC 103806 / TLS) (Chlorobium tepidum).